A 212-amino-acid chain; its full sequence is ATP-dependent dethiobiotin synthetase BioD (212 aa).

10 to 15 (GVGKTF) serves as a coordination point for ATP. Thr14 is a Mg(2+) binding site. Residue Lys36 is part of the active site. Ser40 is a binding site for substrate. ATP is bound by residues Asp45, 106–109 (EGAG), and 167–168 (NC). 2 residues coordinate Mg(2+): Asp45 and Glu106.

It belongs to the dethiobiotin synthetase family. In terms of assembly, homodimer. It depends on Mg(2+) as a cofactor.

The protein resides in the cytoplasm. It catalyses the reaction (7R,8S)-7,8-diammoniononanoate + CO2 + ATP = (4R,5S)-dethiobiotin + ADP + phosphate + 3 H(+). The protein operates within cofactor biosynthesis; biotin biosynthesis; biotin from 7,8-diaminononanoate: step 1/2. Functionally, catalyzes a mechanistically unusual reaction, the ATP-dependent insertion of CO2 between the N7 and N8 nitrogen atoms of 7,8-diaminopelargonic acid (DAPA, also called 7,8-diammoniononanoate) to form a ureido ring. The chain is ATP-dependent dethiobiotin synthetase BioD from Methanococcus aeolicus (strain ATCC BAA-1280 / DSM 17508 / OCM 812 / Nankai-3).